The primary structure comprises 65 residues: Large ribosomal subunit protein bL35 (65 aa).

Over residues 1 to 15 (MPKMKTKKSASKRFT) the composition is skewed to basic residues. 2 disordered regions span residues 1–26 (MPKMKTKKSASKRFTARPGGTIKRGQ) and 38–65 (TKNKRHLRGTEGVHETNLKSVRAMMPYA). The span at 45–54 (RGTEGVHETN) shows a compositional bias: basic and acidic residues.

The protein belongs to the bacterial ribosomal protein bL35 family.

The protein is Large ribosomal subunit protein bL35 of Ralstonia pickettii (strain 12J).